Reading from the N-terminus, the 385-residue chain is Leucine aminopeptidase 1 (385 aa).

An N-terminal signal peptide occupies residues 1 to 19 (MKFPSFLSLGIAASTTALA). Residues 20 to 87 (ALPDQKPIGD…FPRAFAKTAV (68 aa)) constitute a propeptide that is removed on maturation. N-linked (GlcNAc...) asparagine glycosylation is present at asparagine 177. Zn(2+) contacts are provided by histidine 185 and aspartate 204. The N-linked (GlcNAc...) asparagine glycan is linked to asparagine 229. The Zn(2+) site is built by glutamate 243 and aspartate 270. Cysteine 319 and cysteine 323 are joined by a disulfide. A Zn(2+)-binding site is contributed by histidine 352.

It belongs to the peptidase M28 family. M28E subfamily. In terms of assembly, monomer. Zn(2+) serves as cofactor.

It is found in the secreted. Its function is as follows. Extracellular aminopeptidase that allows assimilation of proteinaceous substrates. The protein is Leucine aminopeptidase 1 (LAP1) of Blastomyces gilchristii (strain SLH14081) (Blastomyces dermatitidis).